A 509-amino-acid polypeptide reads, in one-letter code: Lanosterol 14-alpha demethylase (509 aa).

The helical transmembrane segment at glycine 30–isoleucine 50 threads the bilayer. Cysteine 455 serves as a coordination point for heme.

Belongs to the cytochrome P450 family. Heme serves as cofactor. Post-translationally, ubiquitinated by MARCHF6, leading to proteasomal degradation. In terms of tissue distribution, ubiquitously expressed with highest levels in testis, ovary, adrenal, prostate, liver, kidney and lung.

Its subcellular location is the endoplasmic reticulum membrane. It localises to the microsome membrane. It carries out the reaction a 14alpha-methyl steroid + 3 reduced [NADPH--hemoprotein reductase] + 3 O2 = a Delta(14) steroid + formate + 3 oxidized [NADPH--hemoprotein reductase] + 4 H2O + 4 H(+). It catalyses the reaction lanosterol + 3 reduced [NADPH--hemoprotein reductase] + 3 O2 = 4,4-dimethyl-5alpha-cholesta-8,14,24-trien-3beta-ol + formate + 3 oxidized [NADPH--hemoprotein reductase] + 4 H2O + 4 H(+). The enzyme catalyses 24,25-dihydrolanosterol + 3 reduced [NADPH--hemoprotein reductase] + 3 O2 = 4,4-dimethyl-8,14-cholestadien-3beta-ol + formate + 3 oxidized [NADPH--hemoprotein reductase] + 4 H2O + 4 H(+). The catalysed reaction is a 14alpha-methyl steroid + reduced [NADPH--hemoprotein reductase] + O2 = a 14alpha-hydroxymethyl steroid + oxidized [NADPH--hemoprotein reductase] + H2O + H(+). It carries out the reaction a 14alpha-hydroxymethyl steroid + reduced [NADPH--hemoprotein reductase] + O2 = a 14alpha-formyl steroid + oxidized [NADPH--hemoprotein reductase] + 2 H2O + H(+). It catalyses the reaction a 14alpha-formyl steroid + reduced [NADPH--hemoprotein reductase] + O2 = a Delta(14) steroid + formate + oxidized [NADPH--hemoprotein reductase] + H2O + 2 H(+). The enzyme catalyses lanosterol + reduced [NADPH--hemoprotein reductase] + O2 = 32-hydroxylanosterol + oxidized [NADPH--hemoprotein reductase] + H2O + H(+). The catalysed reaction is 32-hydroxylanosterol + reduced [NADPH--hemoprotein reductase] + O2 = 32-oxolanosterol + oxidized [NADPH--hemoprotein reductase] + 2 H2O + H(+). It carries out the reaction 32-oxolanosterol + reduced [NADPH--hemoprotein reductase] + O2 = 4,4-dimethyl-5alpha-cholesta-8,14,24-trien-3beta-ol + formate + oxidized [NADPH--hemoprotein reductase] + H2O + 2 H(+). It catalyses the reaction 24,25-dihydrolanosterol + reduced [NADPH--hemoprotein reductase] + O2 = 32-hydroxy-24,25-dihydrolanosterol + oxidized [NADPH--hemoprotein reductase] + H2O + H(+). The enzyme catalyses 32-hydroxy-24,25-dihydrolanosterol + reduced [NADPH--hemoprotein reductase] + O2 = 32-oxo-24,25-dihydrolanosterol + oxidized [NADPH--hemoprotein reductase] + 2 H2O + H(+). The catalysed reaction is 32-oxo-24,25-dihydrolanosterol + reduced [NADPH--hemoprotein reductase] + O2 = 4,4-dimethyl-8,14-cholestadien-3beta-ol + formate + oxidized [NADPH--hemoprotein reductase] + H2O + 2 H(+). The protein operates within steroid biosynthesis; zymosterol biosynthesis; zymosterol from lanosterol: step 1/6. With respect to regulation, inhibited by azalanstat. Inhibited by azole antifungal agents ketoconazole, itraconazole and fluconazole. Sterol 14alpha-demethylase that plays a critical role in the cholesterol biosynthesis pathway, being cholesterol the major sterol component in mammalian membranes as well as a precursor for bile acid and steroid hormone synthesis. Cytochrome P450 monooxygenase that catalyzes the three-step oxidative removal of the 14alpha-methyl group (C-32) of sterols such as lanosterol (lanosta-8,24-dien-3beta-ol) and 24,25-dihydrolanosterol (DHL) in the form of formate, and converts the sterols to 4,4-dimethyl-5alpha-cholesta-8,14,24-trien-3beta-ol and 4,4-dimethyl-8,14-cholestadien-3beta-ol, respectively, which are intermediates of cholesterol biosynthesis. Can also demethylate substrates not intrinsic to mammals, such as eburicol (24-methylene-24,25-dihydrolanosterol), but at a lower rate than DHL. This is Lanosterol 14-alpha demethylase from Homo sapiens (Human).